Here is a 446-residue protein sequence, read N- to C-terminus: Histidine--tRNA ligase (446 aa).

This sequence belongs to the class-II aminoacyl-tRNA synthetase family. As to quaternary structure, homodimer.

It localises to the cytoplasm. It carries out the reaction tRNA(His) + L-histidine + ATP = L-histidyl-tRNA(His) + AMP + diphosphate + H(+). The protein is Histidine--tRNA ligase of Burkholderia cenocepacia (strain ATCC BAA-245 / DSM 16553 / LMG 16656 / NCTC 13227 / J2315 / CF5610) (Burkholderia cepacia (strain J2315)).